Reading from the N-terminus, the 292-residue chain is Cbb3-type cytochrome c oxidase subunit CcoP (292 aa).

A run of 2 helical transmembrane segments spans residues 11–31 (FGLI…SSLI) and 62–82 (VGWI…FFFG). 2 Cytochrome c domains span residues 116–195 (ELVD…MAEI) and 205–288 (QLID…QSLK). Residues cysteine 129, cysteine 132, histidine 133, methionine 174, cysteine 219, cysteine 222, histidine 223, and methionine 264 each contribute to the heme c site.

This sequence belongs to the CcoP / FixP family. In terms of assembly, component of the cbb3-type cytochrome c oxidase at least composed of CcoN, CcoO, CcoQ and CcoP. Heme c serves as cofactor.

It is found in the cell inner membrane. It functions in the pathway energy metabolism; oxidative phosphorylation. Its function is as follows. C-type cytochrome. Part of the cbb3-type cytochrome c oxidase complex. CcoP subunit is required for transferring electrons from donor cytochrome c via its heme groups to CcoO subunit. From there, electrons are shuttled to the catalytic binuclear center of CcoN subunit where oxygen reduction takes place. The complex also functions as a proton pump. This chain is Cbb3-type cytochrome c oxidase subunit CcoP, found in Helicobacter pylori (Campylobacter pylori).